Here is a 493-residue protein sequence, read N- to C-terminus: Glutamyl-tRNA(Gln) amidotransferase subunit A (493 aa).

Catalysis depends on charge relay system residues K78 and S158. The active-site Acyl-ester intermediate is the S182.

It belongs to the amidase family. GatA subfamily. As to quaternary structure, heterotrimer of A, B and C subunits.

It catalyses the reaction L-glutamyl-tRNA(Gln) + L-glutamine + ATP + H2O = L-glutaminyl-tRNA(Gln) + L-glutamate + ADP + phosphate + H(+). In terms of biological role, allows the formation of correctly charged Gln-tRNA(Gln) through the transamidation of misacylated Glu-tRNA(Gln) in organisms which lack glutaminyl-tRNA synthetase. The reaction takes place in the presence of glutamine and ATP through an activated gamma-phospho-Glu-tRNA(Gln). This chain is Glutamyl-tRNA(Gln) amidotransferase subunit A, found in Rickettsia bellii (strain RML369-C).